The chain runs to 290 residues: Formamidopyrimidine-DNA glycosylase (290 aa).

The active-site Schiff-base intermediate with DNA is the P2. E3 acts as the Proton donor in catalysis. Catalysis depends on K58, which acts as the Proton donor; for beta-elimination activity. DNA-binding residues include H97, R122, and K165. The FPG-type; atypical zinc-finger motif lies at 250–290 (KVYGREGEPCPGCDCDPVRTGGIARIVQSGRSTFYCPRHQR). R280 serves as the catalytic Proton donor; for delta-elimination activity.

It belongs to the FPG family. As to quaternary structure, monomer. Zn(2+) serves as cofactor.

It catalyses the reaction Hydrolysis of DNA containing ring-opened 7-methylguanine residues, releasing 2,6-diamino-4-hydroxy-5-(N-methyl)formamidopyrimidine.. The enzyme catalyses 2'-deoxyribonucleotide-(2'-deoxyribose 5'-phosphate)-2'-deoxyribonucleotide-DNA = a 3'-end 2'-deoxyribonucleotide-(2,3-dehydro-2,3-deoxyribose 5'-phosphate)-DNA + a 5'-end 5'-phospho-2'-deoxyribonucleoside-DNA + H(+). Its function is as follows. Involved in base excision repair of DNA damaged by oxidation or by mutagenic agents. Acts as a DNA glycosylase that recognizes and removes damaged bases. Has a preference for oxidized purines, such as 7,8-dihydro-8-oxoguanine (8-oxoG). Has AP (apurinic/apyrimidinic) lyase activity and introduces nicks in the DNA strand. Cleaves the DNA backbone by beta-delta elimination to generate a single-strand break at the site of the removed base with both 3'- and 5'-phosphates. This Rhodospirillum centenum (strain ATCC 51521 / SW) protein is Formamidopyrimidine-DNA glycosylase.